Reading from the N-terminus, the 804-residue chain is Leucine--tRNA ligase (804 aa).

The short motif at 39–50 (PYPSGAGLHVGH) is the 'HIGH' region element. The 'KMSKS' region signature appears at 580–584 (KMSKS). ATP is bound at residue lysine 583.

Belongs to the class-I aminoacyl-tRNA synthetase family.

It is found in the cytoplasm. It carries out the reaction tRNA(Leu) + L-leucine + ATP = L-leucyl-tRNA(Leu) + AMP + diphosphate. The sequence is that of Leucine--tRNA ligase from Mycoplasma mycoides subsp. mycoides SC (strain CCUG 32753 / NCTC 10114 / PG1).